The chain runs to 308 residues: MILKSFLLGNLLSLCMKIINSVVVVGFYYGFLTTFSIGPSYLFLLRAQVMEEETEKEISSTTGFITGQLMMFISIYYAPLHLALGRPHTITVLVLPHLLFHFFWNNHKHFLDYGSTTRNSMRNLSIQCVFLNNLIFQLFNHFILPSSTLARLVNIYLFRCNSKILFVTSSFVGWLIGHILFMKWVGLVLSWIRQNHSIRSNKYLVSELTNSMARIFSILLFITSVYYLGRMPSPIVTKKLKETSEMEERGESEEETDVEIETTSETKETKQEQEGSTEEDPSLCSEEQEDPDKLDETGRDPSEWKGNI.

The next 6 membrane-spanning stretches (helical) occupy residues 18–38 (IINSVVVVGFYYGFLTTFSIG), 64–84 (FITGQLMMFISIYYAPLHLAL), 87–107 (PHTITVLVLPHLLFHFFWNNH), 124–144 (LSIQCVFLNNLIFQLFNHFIL), 172–192 (VGWLIGHILFMKWVGLVLSWI), and 215–235 (IFSILLFITSVYYLGRMPSPI). Positions 239–249 (KLKETSEMEER) are enriched in basic and acidic residues. The disordered stretch occupies residues 239–308 (KLKETSEMEE…RDPSEWKGNI (70 aa)). Over residues 250 to 262 (GESEEETDVEIET) the composition is skewed to acidic residues. Residues 264-273 (SETKETKQEQ) are compositionally biased toward basic and acidic residues. Over residues 275–293 (GSTEEDPSLCSEEQEDPDK) the composition is skewed to acidic residues. Over residues 294-308 (LDETGRDPSEWKGNI) the composition is skewed to basic and acidic residues.

This sequence belongs to the TIC214 family. As to quaternary structure, part of the Tic complex.

Its subcellular location is the plastid. It localises to the chloroplast inner membrane. Its function is as follows. Involved in protein precursor import into chloroplasts. May be part of an intermediate translocation complex acting as a protein-conducting channel at the inner envelope. The protein is Putative protein TIC 214 N-terminal part of Piper cenocladum (Ant piper).